The primary structure comprises 60 residues: Large ribosomal subunit protein uL30 (60 aa).

This sequence belongs to the universal ribosomal protein uL30 family. Part of the 50S ribosomal subunit.

This chain is Large ribosomal subunit protein uL30, found in Streptococcus equi subsp. equi (strain 4047).